We begin with the raw amino-acid sequence, 2149 residues long: Oxygen-regulated protein 1 (2149 aa).

Positions 1–20 (MSDTPSTGFSMIHPTSSEGQ) are enriched in polar residues. Residues 1–25 (MSDTPSTGFSMIHPTSSEGQVPSPR) are disordered. The Doublecortin 1 domain occupies 36–118 (KRISFYKSGD…GRKVQPVDLD (83 aa)). The segment at 127-148 (WLSSRAVSTHAPPHSVAAPGMP) is disordered. One can recognise a Doublecortin 2 domain in the interval 152-231 (RSLVVFRNGD…REPFKPGNYD (80 aa)). 3 disordered regions span residues 351-373 (VSKTGPSNNDEKSEMSFPGRTES), 1435-1456 (MEEPRTSEEPGSVTNSVTSSER), and 1583-1613 (VTSDWSDYRPDSDSEQAYKTSSDDPNDSGEL). The span at 1446-1456 (SVTNSVTSSER) shows a compositional bias: polar residues.

In terms of assembly, interacts (via the doublecortin domains) with microtubules. Interacts with RP1L1. Interacts with MAK.

The protein localises to the cytoplasm. The protein resides in the cytoskeleton. It localises to the cilium axoneme. Its subcellular location is the cell projection. It is found in the cilium. The protein localises to the photoreceptor outer segment. Its function is as follows. Microtubule-associated protein regulating the stability and length of the microtubule-based axoneme of photoreceptors. Required for the differentiation of photoreceptor cells, it plays a role in the organization of the outer segment of rod and cone photoreceptors ensuring the correct orientation and higher-order stacking of outer segment disks along the photoreceptor axoneme. In Saimiri boliviensis boliviensis (Bolivian squirrel monkey), this protein is Oxygen-regulated protein 1 (RP1).